Consider the following 440-residue polypeptide: MTKKLVTEEMRKQWLPVLQKESEAIQPLSAENVTIRLMQNQAEWNAKNLGESDAPGSVNSTVGKWQPVLIDMAKRLAPINIAMDFFGVQPLSGPDGQIFALRARQGVGDGSTTAQARKELFMNEADSGYSGDGTVQAGDPSGFSQAEIEGSGSVVTTIGKGMPSTDAELLGTTTNPWARVGITVQKATVTAKSRGLYADYSHELRQDMMAIHGEDVDNILSDVMVTEIQAEMNREFIRTMNFSAVRFKKFGTNGVVDIAQDISGRWALEKWKFLTFMLEVEANGIGVDTRRGKGNRVLCSPNVASALAMSGMLDYAPVLQENTKLAVDPTGQTFAGVLSNGMRVYVDPYAVAEYITLAYKGATALDAGIFFAPYVPLEMYRTQGETTFSPRMAFKTRYGICANPFVQIPANQDPQVYVTADGIAQDSNPYFRKGLIKSLF.

It belongs to the T4 phage major capsid protein family.

The protein localises to the virion. Functionally, major capsid protein that self-associates to form the icosahedral capsid. The protein is Major capsid protein of Salmonella typhi.